Reading from the N-terminus, the 250-residue chain is Small ribosomal subunit protein uS2 (250 aa).

It belongs to the universal ribosomal protein uS2 family.

In Chloroherpeton thalassium (strain ATCC 35110 / GB-78), this protein is Small ribosomal subunit protein uS2.